We begin with the raw amino-acid sequence, 97 residues long: Small cell adhesion glycoprotein (97 aa).

Topologically, residues 1-36 are extracellular; that stretch reads MTSLLTTPSPREELMTTPILQPTEALSPEDGASTAL. Threonine 2 is a glycosylation site (O-linked (GalNAc...) threonine). O-linked (GalNAc...) serine glycosylation is present at serine 3. O-linked (GalNAc...) threonine glycosylation is found at threonine 6 and threonine 7. O-linked (GalNAc...) serine glycosylation occurs at serine 9. O-linked (GalNAc...) threonine glycosylation is found at threonine 16, threonine 17, and threonine 23. A helical; Signal-anchor for type III membrane protein membrane pass occupies residues 37-57; sequence IAVVITVVFLTLLSVVILIFF. Over 58-97 the chain is Cytoplasmic; the sequence is YLYKNKGSYVTYEPTEGEPSAIVQMESDLAKGSEKEEYFI.

It belongs to the SMAGP family. O-glycosylated. The O-glycan is modified with sialic acid residues. In terms of tissue distribution, detected in breast, endometrium, colon and biliary tract. Detected in polarized epithelial structures characterized by cell-cell adhesion (at protein level).

The protein resides in the cell membrane. Its subcellular location is the cytoplasmic vesicle membrane. Its function is as follows. May play a role in epithelial cell-cell contacts. May play a role in tumor invasiveness and metastasis formation. In Homo sapiens (Human), this protein is Small cell adhesion glycoprotein (SMAGP).